The following is a 702-amino-acid chain: Phosphoglycerol transferase I (702 aa).

3 helical membrane-spanning segments follow: residues 3–25 (WILA…LAWL), 73–95 (GYIA…LRVR), and 102–124 (GGGA…SPLY).

Belongs to the OpgB family.

It is found in the cell inner membrane. The enzyme catalyses a phosphatidylglycerol + a membrane-derived-oligosaccharide D-glucose = a 1,2-diacyl-sn-glycerol + a membrane-derived-oligosaccharide 6-(glycerophospho)-D-glucose.. It participates in glycan metabolism; osmoregulated periplasmic glucan (OPG) biosynthesis. Functionally, transfers a phosphoglycerol residue from phosphatidylglycerol to the membrane-bound nascent glucan backbones. The protein is Phosphoglycerol transferase I of Xanthomonas campestris pv. campestris (strain ATCC 33913 / DSM 3586 / NCPPB 528 / LMG 568 / P 25).